A 363-amino-acid chain; its full sequence is Wortmanamides biosynthesis cluster protein C (363 aa).

Transmembrane regions (helical) follow at residues 15–35, 48–68, 95–115, 129–149, 175–195, 210–230, and 237–257; these read FVTL…RFVA, WLAV…LMAI, IAGL…ILAF, ICIY…CIFQ, ILGG…LAMI, VTVL…KIAV, and LYAF…ALLC. Positions 293–312 are disordered; it reads SSSKNSRKHGPYDSDQSPGP. N-linked (GlcNAc...) asparagine glycosylation occurs at Asn321. Residues 344–363 form a disordered region; it reads SPITHPQAYSKQTTRQFDVV.

This sequence belongs to the SAT4 family.

Its subcellular location is the membrane. It participates in secondary metabolite biosynthesis. Functionally, part of the gene cluster that mediates the biosynthesis of wortmanamides A and B, reduced long-chain polyketides amidated with a specific omega-amino acid, 5-aminopentanoic acid (5PA). The PKS modules of TwmB are involved in the synthesis of the polyketide backbone, whereas the non-canonical C domain of TwmB is a bonafide condensation domain that specifically selects 5PA and catalyzes amidation to release polyketide chain. The C domain clearly prefers C16 and C18 fatty acyl substrates, which is consistent with simultaneous formation of both octaketide and nonaketide acyl amides wortmanamides A and B. Because TwmB lacks a designated enoylreductase (ER) domain, the required activity is provided the enoyl reductase TwmE. The roles of the remaining enzymes have still to be clarified. This Talaromyces wortmannii (Penicillium wortmannii) protein is Wortmanamides biosynthesis cluster protein C.